The chain runs to 274 residues: D-aminoacyl-tRNA deacylase (274 aa).

Belongs to the DtdA deacylase family. Monomer. Requires Zn(2+) as cofactor.

It catalyses the reaction a D-aminoacyl-tRNA + H2O = a tRNA + a D-alpha-amino acid + H(+). The catalysed reaction is glycyl-tRNA(Ala) + H2O = tRNA(Ala) + glycine + H(+). Functionally, D-aminoacyl-tRNA deacylase with broad substrate specificity. By recycling D-aminoacyl-tRNA to D-amino acids and free tRNA molecules, this enzyme counteracts the toxicity associated with the formation of D-aminoacyl-tRNA entities in vivo. The chain is D-aminoacyl-tRNA deacylase from Pyrococcus horikoshii (strain ATCC 700860 / DSM 12428 / JCM 9974 / NBRC 100139 / OT-3).